A 20-amino-acid chain; its full sequence is Phospholipase A2 homolog P-elapitoxin-Aa1a gamma chain (20 aa).

Belongs to the phospholipase A2 family. Group I subfamily. In terms of assembly, heterotrimer of alpha, beta and gamma chains, each related to PLA2. Post-translationally, glycosylated. As to expression, expressed by the venom gland.

Its subcellular location is the secreted. Functionally, heterotrimer: Snake venom phospholipase A2 (PLA2) that has presynaptic neurotoxicity. Inhibits nerve-evoked twitch contractions but not responses to cholinergic agonists acetylcholine and carbachol and to depolarizing agonist KCl. Causes a fade in tetanic contractions. Displays a triphasic mode of action with depression, enhancement and blockade of neurotransmission. Does not display myotoxic activity such as changes in baseline muscle tension or inhibition of directly stimulated muscle twitches. All subunits are necessary for maximum toxicity. Its function is as follows. Monomer: the gamma chain has no significant enzymatic activity and is not toxic by itself. The sequence is that of Phospholipase A2 homolog P-elapitoxin-Aa1a gamma chain from Acanthophis antarcticus (Common death adder).